The following is a 359-amino-acid chain: 3-dehydroquinate synthase (359 aa).

NAD(+)-binding positions include Asp-71–Lys-76, Gly-105–Asp-109, Thr-129–Thr-130, Lys-142, and Lys-151. Glu-184, His-247, and His-264 together coordinate Zn(2+).

It belongs to the sugar phosphate cyclases superfamily. Dehydroquinate synthase family. It depends on Co(2+) as a cofactor. Zn(2+) is required as a cofactor. The cofactor is NAD(+).

The protein localises to the cytoplasm. The enzyme catalyses 7-phospho-2-dehydro-3-deoxy-D-arabino-heptonate = 3-dehydroquinate + phosphate. It participates in metabolic intermediate biosynthesis; chorismate biosynthesis; chorismate from D-erythrose 4-phosphate and phosphoenolpyruvate: step 2/7. Catalyzes the conversion of 3-deoxy-D-arabino-heptulosonate 7-phosphate (DAHP) to dehydroquinate (DHQ). The chain is 3-dehydroquinate synthase from Burkholderia cenocepacia (strain HI2424).